The chain runs to 482 residues: tRNA modification GTPase MnmE (482 aa).

3 residues coordinate (6S)-5-formyl-5,6,7,8-tetrahydrofolate: R25, E82, and K135. A TrmE-type G domain is found at 231-404; sequence GIKVVIAGQP…LRRVLLDIAG (174 aa). N241 lines the K(+) pocket. GTP contacts are provided by residues 241-246, 260-266, 285-288, and 385-387; these read NAGKSS, TPIAGTT, DTAG, and SAR. S245 contacts Mg(2+). Residues T260, I262, and T265 each contribute to the K(+) site. Mg(2+) is bound at residue T266. Position 482 (K482) interacts with (6S)-5-formyl-5,6,7,8-tetrahydrofolate.

This sequence belongs to the TRAFAC class TrmE-Era-EngA-EngB-Septin-like GTPase superfamily. TrmE GTPase family. In terms of assembly, homodimer. Heterotetramer of two MnmE and two MnmG subunits. The cofactor is K(+).

The protein localises to the cytoplasm. In terms of biological role, exhibits a very high intrinsic GTPase hydrolysis rate. Involved in the addition of a carboxymethylaminomethyl (cmnm) group at the wobble position (U34) of certain tRNAs, forming tRNA-cmnm(5)s(2)U34. This chain is tRNA modification GTPase MnmE, found in Paracidovorax citrulli (strain AAC00-1) (Acidovorax citrulli).